A 258-amino-acid chain; its full sequence is Imidazole glycerol phosphate synthase subunit HisF (258 aa).

Active-site residues include aspartate 11 and aspartate 130.

It belongs to the HisA/HisF family. Heterodimer of HisH and HisF.

The protein resides in the cytoplasm. It catalyses the reaction 5-[(5-phospho-1-deoxy-D-ribulos-1-ylimino)methylamino]-1-(5-phospho-beta-D-ribosyl)imidazole-4-carboxamide + L-glutamine = D-erythro-1-(imidazol-4-yl)glycerol 3-phosphate + 5-amino-1-(5-phospho-beta-D-ribosyl)imidazole-4-carboxamide + L-glutamate + H(+). It participates in amino-acid biosynthesis; L-histidine biosynthesis; L-histidine from 5-phospho-alpha-D-ribose 1-diphosphate: step 5/9. In terms of biological role, IGPS catalyzes the conversion of PRFAR and glutamine to IGP, AICAR and glutamate. The HisF subunit catalyzes the cyclization activity that produces IGP and AICAR from PRFAR using the ammonia provided by the HisH subunit. The chain is Imidazole glycerol phosphate synthase subunit HisF from Shigella sonnei (strain Ss046).